We begin with the raw amino-acid sequence, 517 residues long: General transcription factor IIF subunit 1 (517 aa).

At Ala2 the chain carries N-acetylalanine. At Thr156 the chain carries Phosphothreonine. The tract at residues 178-458 (QQRRLKDQDQ…SGDVQVTEDA (281 aa)) is disordered. Over residues 210-225 (LEDDLEMSSDDSEASG) the composition is skewed to acidic residues. Residues Ser217, Ser218, Ser221, and Ser224 each carry the phosphoserine modification. The segment covering 232–251 (PKAKKKAPPSKGGRKKKKKK) has biased composition (basic residues). 2 stretches are compositionally biased toward acidic residues: residues 255 to 270 (DEAFEDSDDGDFEGQE) and 303 to 325 (EQSESSEESEEEKPPEEDKEEEE). Residue Thr331 is modified to Phosphothreonine. Acidic residues predominate over residues 343–355 (EESDSSEESDIDS). Positions 364–374 (AKKKTPPKRER) are enriched in basic residues. 4 positions are modified to phosphoserine: Ser377, Ser380, Ser381, and Ser385. Low complexity predominate over residues 377–391 (SGGSSRGNSRPGTPS). Thr389 carries the phosphothreonine modification. The residue at position 391 (Ser391) is a Phosphoserine. Positions 392–401 (TEAGSTSSTL) are enriched in polar residues. Lys407 is modified (N6-acetyllysine). Residues 428-452 (GPQSLSGKSTPQPQSGKSTPSSGDV) are compositionally biased toward polar residues. A phosphoserine mark is found at Ser431, Ser433, and Ser436. Thr437 and Thr446 each carry phosphothreonine. The residue at position 449 (Ser449) is a Phosphoserine.

This sequence belongs to the TFIIF alpha subunit family. Heterodimer of an alpha and a beta subunit. Interacts with GTF2F2, CTDP1, TAF6/TAFII80 and URI1. Interacts with GTF2B (via C-terminus and preferentially via acetylated form); this interaction prevents binding of GTF2B to GTF2F2. Part of TBP-based Pol II pre-initiation complex (PIC), in which Pol II core assembles with general transcription factors and other specific initiation factors including GTF2E1, GTF2E2, GTF2F1, GTF2F2, TCEA1, ERCC2, ERCC3, GTF2H2, GTF2H3, GTF2H4, GTF2H5, GTF2A1, GTF2A2, GTF2B and TBP; this large multi-subunit PIC complex mediates DNA unwinding and targets Pol II core to the transcription start site where the first phosphodiester bond forms. In terms of processing, phosphorylated on Ser and other residues by TAF1 and casein kinase II-like kinases.

It is found in the nucleus. Functionally, TFIIF is a general transcription initiation factor that binds to RNA polymerase II and helps to recruit it to the initiation complex in collaboration with TFIIB. It promotes transcription elongation. The sequence is that of General transcription factor IIF subunit 1 (GTF2F1) from Bos taurus (Bovine).